A 272-amino-acid chain; its full sequence is Hydroxyethylthiazole kinase (272 aa).

Met-44 is a substrate binding site. Residues Lys-119 and Thr-172 each coordinate ATP. A substrate-binding site is contributed by Gly-199.

It belongs to the Thz kinase family. It depends on Mg(2+) as a cofactor.

The enzyme catalyses 5-(2-hydroxyethyl)-4-methylthiazole + ATP = 4-methyl-5-(2-phosphooxyethyl)-thiazole + ADP + H(+). It participates in cofactor biosynthesis; thiamine diphosphate biosynthesis; 4-methyl-5-(2-phosphoethyl)-thiazole from 5-(2-hydroxyethyl)-4-methylthiazole: step 1/1. Its function is as follows. Catalyzes the phosphorylation of the hydroxyl group of 4-methyl-5-beta-hydroxyethylthiazole (THZ). The chain is Hydroxyethylthiazole kinase from Enterococcus faecalis (strain ATCC 700802 / V583).